A 2089-amino-acid polypeptide reads, in one-letter code: Mediator of DNA damage checkpoint protein 1 (2089 aa).

A compositionally biased stretch (acidic residues) spans 1–19 (MEDTQAIDWDVEEEEETEQ). Residues 1 to 22 (MEDTQAIDWDVEEEEETEQSSE) are disordered. The interaction with CHEK2 stretch occupies residues 1-150 (MEDTQAIDWD…SRGPLTVEET (150 aa)). An interaction with the MRN complex region spans residues 2-220 (EDTQAIDWDV…PFAFNLNSDT (219 aa)). Thr-4 is modified (phosphothreonine; by ATM). Residues 54–105 (NVVGRMPDCSVALPFPSISKQHAEIEILAWDKAPILRDCGSLNGTQILRPPK) form the FHA domain. The residue at position 108 (Ser-108) is a Phosphoserine. The segment at 145–568 (LTVEETPRVQ…PAKLLVVSLE (424 aa)) is required for nuclear localization (NLS1). Thr-146 is modified (phosphothreonine). Ser-168 bears the Phosphoserine; by CK2 mark. A Phosphoserine modification is found at Ser-176. 3 disordered regions span residues 185-248 (RTTS…AKQS), 261-280 (DQPL…GAGN), and 286-317 (GVIL…AEVH). Ser-196 and Ser-218 each carry phosphoserine; by CK2. Thr-220 carries the phosphothreonine; by CK2 modification. Residues 261 to 274 (DQPLVKERDNDTKV) show a composition bias toward basic and acidic residues. Residue Ser-299 is modified to Phosphoserine; by CK2. Phosphothreonine; by CK2 is present on Thr-301. A compositionally biased stretch (basic and acidic residues) spans 306 to 317 (DSRPPGRPAEVH). Ser-329 carries the post-translational modification Phosphoserine; by CK2. Position 331 is a phosphothreonine; by CK2 (Thr-331). Residue Ser-372 is modified to Phosphoserine. Ser-376 bears the Phosphoserine; by CK2 mark. A Phosphothreonine; by CK2 modification is found at Thr-378. Phosphoserine is present on residues Ser-394 and Ser-397. Ser-402 carries the phosphoserine; by CK2 modification. At Thr-404 the chain carries Phosphothreonine; by CK2. Ser-411 carries the post-translational modification Phosphoserine. At Thr-449 the chain carries Phosphothreonine. Ser-453 carries the post-translational modification Phosphoserine; by CK2. Thr-455 is modified (phosphothreonine; by CK2). Positions 482 to 515 (RAHSEKDQPPFGDSDDSVEADKSSPGIHLERSQA) are disordered. 6 positions are modified to phosphoserine: Ser-485, Ser-495, Ser-498, Ser-504, Ser-505, and Ser-513. Residue Thr-523 is modified to Phosphothreonine. Ser-590 is modified (phosphoserine). Lys-616 participates in a covalent cross-link: Glycyl lysine isopeptide (Lys-Gly) (interchain with G-Cter in SUMO1); alternate. Lys-616 participates in a covalent cross-link: Glycyl lysine isopeptide (Lys-Gly) (interchain with G-Cter in SUMO2); alternate. 2 disordered regions span residues 653–689 (DTLG…DNYG) and 780–1887 (SPPR…TKLN). Basic and acidic residues predominate over residues 671 to 685 (GREREQHVGGTKDSE). Phosphoserine occurs at positions 780 and 793. Lys-812 is subject to N6-acetyllysine. 4 stretches are compositionally biased toward basic and acidic residues: residues 819-844 (ETAE…ERQT), 851-862 (ELTKGKQDREQK), 868-905 (DTQR…EKQV), and 914-951 (AFER…RGEP). Phosphoserine occurs at positions 955 and 998. Positions 955–965 (SQDQKGQASSP) are enriched in polar residues. Over residues 1016 to 1031 (KASRIRAAEKVSRGDQ) the composition is skewed to basic and acidic residues. Ser-1033 is subject to Phosphoserine. Positions 1040–1051 (PTVPEAPAPPQK) are enriched in pro residues. Phosphoserine occurs at positions 1068 and 1086. Residues 1103–1113 (PKPKIRTRKSS) show a composition bias toward basic residues. Residues 1129 to 1156 (PSTSTAQPVTPKPTSQATRSRTNRSSVK) are compositionally biased toward polar residues. The interval 1148 to 1610 (SRTNRSSVKT…TNRSSVKTPE (463 aa)) is interaction with the PRKDC complex. Residue Thr-1157 is modified to Phosphothreonine. Polar residues predominate over residues 1169–1187 (QPSTSTDQPVTSEPTSQVT). A Phosphothreonine modification is found at Thr-1198. Residues 1210-1228 (QPSTSTDRPVTSEPTSQAT) show a composition bias toward polar residues. Ser-1235 is subject to Phosphoserine. A Phosphothreonine modification is found at Thr-1239. Polar residues predominate over residues 1251-1268 (QPSTSTDQPVTSEPTYQA). Thr-1280 and Thr-1302 each carry phosphothreonine. Low complexity-rich tracts occupy residues 1304–1318 (KPTS…NMSS) and 1347–1359 (TSRT…NMSS). Positions 1375–1391 (PSTSTEQPVTPEPTSRA) are enriched in polar residues. Phosphoserine occurs at positions 1399 and 1400. Lys-1402 carries the post-translational modification N6-acetyllysine. Thr-1403 carries the phosphothreonine modification. A Glycyl lysine isopeptide (Lys-Gly) (interchain with G-Cter in SUMO1); alternate cross-link involves residue Lys-1413. A Glycyl lysine isopeptide (Lys-Gly) (interchain with G-Cter in SUMO2); alternate cross-link involves residue Lys-1413. 4 stretches are compositionally biased toward polar residues: residues 1416 to 1444 (PSTS…SVKT), 1456 to 1475 (QPST…QATR), 1498 to 1514 (ASAS…TSRT), and 1538 to 1555 (QPST…TSRA). A phosphothreonine mark is found at Thr-1425 and Thr-1466. Position 1548 is a phosphothreonine (Thr-1548). A Phosphoserine modification is found at Ser-1564. Thr-1567 and Thr-1589 each carry phosphothreonine. The segment covering 1579–1596 (QPSTSRNQLVTPEPTSRA) has biased composition (polar residues). Position 1604 is a phosphoserine (Ser-1604). Phosphothreonine is present on Thr-1608. Pro residues predominate over residues 1611-1620 (PVVPTAPEPH). A compositionally biased stretch (polar residues) spans 1624-1636 (STDQPVTPKLTSR). Residues Thr-1630, Thr-1664, and Thr-1671 each carry the phosphothreonine modification. Residues 1678 to 1689 (GGQSKTLRSSTV) are compositionally biased toward polar residues. Ser-1681 bears the Phosphoserine mark. Thr-1697 bears the Phosphothreonine mark. The span at 1698-1719 (PEFQSPVTTDQPISPEPITQPS) shows a compositional bias: polar residues. Positions 1698 to 2089 (PEFQSPVTTD…VLSPLEMSST (392 aa)) are required for nuclear localization (NLS2). Residues Ser-1702 and Ser-1711 each carry the phosphoserine modification. Lys-1740 participates in a covalent cross-link: Glycyl lysine isopeptide (Lys-Gly) (interchain with G-Cter in SUMO2). Ser-1775 is subject to Phosphoserine. Lys-1790 participates in a covalent cross-link: Glycyl lysine isopeptide (Lys-Gly) (interchain with G-Cter in SUMO2). Position 1800 is a phosphothreonine (Thr-1800). The residue at position 1820 (Ser-1820) is a Phosphoserine. A compositionally biased stretch (polar residues) spans 1823–1836 (HQKQPQRGEVSQKT). Lys-1840 participates in a covalent cross-link: Glycyl lysine isopeptide (Lys-Gly) (interchain with G-Cter in SUMO1); alternate. Residue Lys-1840 forms a Glycyl lysine isopeptide (Lys-Gly) (interchain with G-Cter in SUMO2); alternate linkage. A compositionally biased stretch (basic and acidic residues) spans 1847-1857 (AEKPGKEEDVV). Position 1858 is a phosphothreonine (Thr-1858). BRCT domains lie at 1892 to 1970 (APKV…EYVV) and 1991 to 2082 (RERR…FVLS). At Arg-1943 the chain carries Omega-N-methylarginine.

In terms of assembly, homodimer. Interacts with H2AX, which requires phosphorylation of H2AX on 'Ser-139'. Interacts with the MRN complex, composed of MRE11, RAD50, and NBN. Interacts with CHEK2, which requires ATM-mediated phosphorylation of 'Thr-68' within the FHA domain of CHEK2. Interacts constitutively with the BRCA1-BARD1 complex, SMC1A and TP53BP1. Interacts with ATM and FANCD2, and these interactions are reduced upon DNA damage. Also interacts with the PRKDC complex, composed of XRCC6/KU70, XRCC5/KU80 and PRKDC/XRCC7. This interaction may be required for PRKDC autophosphorylation, which is essential for DNA double strand break (DSB) repair. When phosphorylated by ATM, interacts with RNF8 (via FHA domain). Interacts with CEP164. When phosphorylated, interacts with APTX (via FHA-like domain). Interacts (when phosphorylated) with TOPBP1; promoting TOPBP1 localization to DNA damage sites during mitosis. Interacts (when phosphorylated) with NBN; promoting NBN and MRN complex localization to DNA damage sites. Post-translationally, phosphorylated upon exposure to ionizing radiation (IR), ultraviolet radiation (UV), and hydroxyurea (HU). Phosphorylation in response to IR requires ATM, NBN, and possibly CHEK2. Also phosphorylated during the G2/M phase of the cell cycle and during activation of the mitotic spindle checkpoint. Phosphorylation at Thr-4 by ATM stabilizes and enhances homodimerization via the FHA domain. Phosphorylated at Ser-168 and Ser-196 by CK2 in response to DNA damage during mitosis, promoting interaction with TOPBP1. Phosphorylated by CK2 in response to DNA damage, promoting interaction with NBN and recruitment of the MRN complex to DNA damage sites. In terms of processing, sumoylation at Lys-1840 by PIAS4 following DNA damage promotes ubiquitin-mediated degradation. Ubiquitinated by RNF4, leading to proteasomal degradation; undergoes 'Lys-48'-linked polyubiquitination. Highly expressed in testis.

The protein resides in the nucleus. Its subcellular location is the chromosome. Histone reader protein required for checkpoint-mediated cell cycle arrest in response to DNA damage within both the S phase and G2/M phases of the cell cycle. Specifically recognizes and binds histone H2AX phosphorylated at 'Ser-139', a marker of DNA damage, serving as a scaffold for the recruitment of DNA repair and signal transduction proteins to discrete foci of DNA damage sites. Also required for downstream events subsequent to the recruitment of these proteins. These include phosphorylation and activation of the ATM, CHEK1 and CHEK2 kinases, and stabilization of TP53/p53 and apoptosis. ATM and CHEK2 may also be activated independently by a parallel pathway mediated by TP53BP1. Required for chromosomal stability during mitosis by promoting recruitment of TOPBP1 to DNA double strand breaks (DSBs): TOPBP1 forms filamentous assemblies that bridge MDC1 and tether broken chromosomes during mitosis. Required for the repair of DSBs via homologous recombination by promoting recruitment of NBN component of the MRN complex to DSBs. The protein is Mediator of DNA damage checkpoint protein 1 of Homo sapiens (Human).